The sequence spans 485 residues: Ribulose bisphosphate carboxylase large chain (485 aa).

Residues 1–2 (MS) constitute a propeptide that is removed on maturation. Proline 3 is subject to N-acetylproline. At lysine 14 the chain carries N6,N6,N6-trimethyllysine. Positions 123 and 173 each coordinate substrate. Lysine 175 serves as the catalytic Proton acceptor. Lysine 177 contributes to the substrate binding site. 3 residues coordinate Mg(2+): lysine 201, aspartate 203, and glutamate 204. The residue at position 201 (lysine 201) is an N6-carboxylysine. Histidine 294 functions as the Proton acceptor in the catalytic mechanism. Residues arginine 295, histidine 327, and serine 379 each coordinate substrate.

Belongs to the RuBisCO large chain family. Type I subfamily. Heterohexadecamer of 8 large chains and 8 small chains; disulfide-linked. The disulfide link is formed within the large subunit homodimers. Mg(2+) serves as cofactor. The disulfide bond which can form in the large chain dimeric partners within the hexadecamer appears to be associated with oxidative stress and protein turnover.

The protein resides in the plastid. It is found in the chloroplast. The catalysed reaction is 2 (2R)-3-phosphoglycerate + 2 H(+) = D-ribulose 1,5-bisphosphate + CO2 + H2O. It catalyses the reaction D-ribulose 1,5-bisphosphate + O2 = 2-phosphoglycolate + (2R)-3-phosphoglycerate + 2 H(+). Functionally, ruBisCO catalyzes two reactions: the carboxylation of D-ribulose 1,5-bisphosphate, the primary event in carbon dioxide fixation, as well as the oxidative fragmentation of the pentose substrate in the photorespiration process. Both reactions occur simultaneously and in competition at the same active site. The chain is Ribulose bisphosphate carboxylase large chain from Flaveria pringlei.